The primary structure comprises 113 residues: Hydrogenase maturation factor HybF (113 aa).

Ni(2+) contacts are provided by H2 and E3. Zn(2+) contacts are provided by C73, C76, C89, and C92.

The protein belongs to the HypA/HybF family. HybF subfamily.

Its function is as follows. Involved in the maturation of [NiFe] hydrogenases. Required for nickel insertion into the metal center of the hydrogenase. The polypeptide is Hydrogenase maturation factor HybF (Proteus vulgaris).